The chain runs to 453 residues: UDP-N-acetylmuramate--L-alanyl-gamma-D-glutamyl-meso-2,6-diaminoheptandioate ligase (453 aa).

An ATP-binding site is contributed by 111-117; sequence GTHGKTT.

Belongs to the MurCDEF family. Mpl subfamily. Requires Mg(2+) as cofactor.

It carries out the reaction UDP-N-acetyl-alpha-D-muramate + L-alanyl-gamma-D-glutamyl-meso-2,6-diaminopimelate + ATP = UDP-N-acetyl-alpha-D-muramoyl-L-alanyl-gamma-D-glutamyl-meso-2,6-diaminopimelate + ADP + phosphate + H(+). It functions in the pathway cell wall biogenesis; peptidoglycan recycling. Functionally, reutilizes the intact tripeptide L-alanyl-gamma-D-glutamyl-meso-diaminopimelate by linking it to UDP-N-acetylmuramate. The protein is UDP-N-acetylmuramate--L-alanyl-gamma-D-glutamyl-meso-2,6-diaminoheptandioate ligase of Haemophilus influenzae (strain ATCC 51907 / DSM 11121 / KW20 / Rd).